We begin with the raw amino-acid sequence, 143 residues long: uncharacterized protein (143 aa).

The tract at residues 1 to 37 (MSAPASSSAIAPSQPTAPGHARHSASWSASASDPSGA) is disordered.

Belongs to the dynein light chain Tctex-type family.

This is an uncharacterized protein from Mycosarcoma maydis (Corn smut fungus).